The following is a 392-amino-acid chain: L-serine phosphate decarboxylase (392 aa).

The segment at 22–29 (NAGSHSPS) is required for catalytic activity. An O-phospho-L-serine-binding site is contributed by Asn180. Lys243 carries the N6-(pyridoxal phosphate)lysine modification. Positions 354 and 368 each coordinate O-phospho-L-serine.

It belongs to the class-II pyridoxal-phosphate-dependent aminotransferase family. Homodimer. Pyridoxal 5'-phosphate serves as cofactor.

The catalysed reaction is O-phospho-L-serine + H(+) = phosphoethanolamine + CO2. It participates in cofactor biosynthesis. Pyridoxal phosphate (PLP)-dependent decarboxylase involved in the biosynthesis of norcobamides, cofactors in the tetrachloroethene reductive dehalogenase PceA of S.multivorans. Catalyzes the decarboxylation of L-serine O-phosphate to ethanolamine O-phosphate, the precursor for the linkage between the nucleotide loop and the corrin ring in norcobamide. Less active with L-threonine phosphate. No activity with L-serine or L-threonine. Has no aminotransferase activity as no production of L-glutamate with L-histidinol phosphate and 2-oxoglutarate as substrates. Complements growth defects in the S.enterica cobD deletion mutant, but of the cobamides, the norpseudo-vitamin B12 (norpseudo-B12) rather than the pseudo-B12 is produced in the mutant. However, addition of L-threonine phosphate to the culture minimal medium of the mutant results in formation of also the pseudo-B12, indicating the dual substrate specificity of this enzyme. The sequence is that of L-serine phosphate decarboxylase from Sulfurospirillum multivorans (strain DM 12446 / JCM 15788 / NBRC 109480).